The sequence spans 425 residues: Protein upregulated in glial subsets pugs-5 (425 aa).

Over residues 355–373 the composition is skewed to basic and acidic residues; the sequence is NNNDVEKSTQIEKKPEKQG. The tract at residues 355 to 407 is disordered; sequence NNNDVEKSTQIEKKPEKQGPEIQEEVVEMETVKDEQPPKTSAVRFKENSPRLM.

The protein is Protein upregulated in glial subsets pugs-5 of Caenorhabditis elegans.